A 492-amino-acid polypeptide reads, in one-letter code: Probable glycine dehydrogenase (decarboxylating) subunit 2 (492 aa).

At K274 the chain carries N6-(pyridoxal phosphate)lysine.

It belongs to the GcvP family. C-terminal subunit subfamily. As to quaternary structure, the glycine cleavage system is composed of four proteins: P, T, L and H. In this organism, the P 'protein' is a heterodimer of two subunits. Pyridoxal 5'-phosphate is required as a cofactor.

The enzyme catalyses N(6)-[(R)-lipoyl]-L-lysyl-[glycine-cleavage complex H protein] + glycine + H(+) = N(6)-[(R)-S(8)-aminomethyldihydrolipoyl]-L-lysyl-[glycine-cleavage complex H protein] + CO2. Functionally, the glycine cleavage system catalyzes the degradation of glycine. The P protein binds the alpha-amino group of glycine through its pyridoxal phosphate cofactor; CO(2) is released and the remaining methylamine moiety is then transferred to the lipoamide cofactor of the H protein. This is Probable glycine dehydrogenase (decarboxylating) subunit 2 from Staphylococcus haemolyticus (strain JCSC1435).